The chain runs to 364 residues: Melatonin receptor type 1B (364 aa).

At 1-42 the chain is on the extracellular side; sequence MPENSSIPNCCEASGLAARPSWSGSAGARPPVTARAPWVAPM. The N-linked (GlcNAc...) asparagine glycan is linked to Asn-4. The chain crosses the membrane as a helical span at residues 43–63; that stretch reads LSTVVVVTTAVDFVGNLLVIL. At 64 to 76 the chain is on the cytoplasmic side; sequence SVLRNRKLRNAGN. A helical membrane pass occupies residues 77–97; it reads LFVVSLALADLVIALYPYPLI. Residues 98-115 lie on the Extracellular side of the membrane; sequence LVAIIRDGWVLGEAHCKA. The cysteines at positions 113 and 190 are disulfide-linked. A helical transmembrane segment spans residues 116–136; the sequence is SAFVMGLSVIGSVFNITAIAI. Residues 137-155 lie on the Cytoplasmic side of the membrane; the sequence is NRYCCICHSTTYHRVCSHW. A helical membrane pass occupies residues 156-176; it reads YTPIYISLVWLLTLVALVPNF. The Extracellular segment spans residues 177 to 200; it reads FVGSLEYDPRIYSCTFIQTASTQY. The helical transmembrane segment at 201–221 threads the bilayer; the sequence is TAAVVAIHFLLPMAVVSFCYL. Residues 222 to 253 lie on the Cytoplasmic side of the membrane; the sequence is RIWVLVLQARRKAKATRKLRLRPSDLRSFLTM. The helical transmembrane segment at 254–274 threads the bilayer; sequence FAVFVVFAICWAPLNCIGLAV. Over 275 to 287 the chain is Extracellular; sequence AINPEAMALQVPE. Residues 288 to 308 form a helical membrane-spanning segment; the sequence is GLFVTSYFLAYFNSCLNAIVY. Topologically, residues 309–364 are cytoplasmic; the sequence is GLLNQNFRREYKRILLAIWNTRRCIQHASKHCLTEERQGPTPPAARATVPVKEGAL. Residues 343-364 are disordered; the sequence is EERQGPTPPAARATVPVKEGAL. The segment covering 352-364 has biased composition (low complexity); sequence AARATVPVKEGAL.

The protein belongs to the G-protein coupled receptor 1 family.

The protein localises to the cell membrane. High affinity receptor for melatonin. The activity of this receptor is mediated by pertussis toxin sensitive G proteins that inhibits adenylate cyclase activity. This is Melatonin receptor type 1B (Mtnr1b) from Mus musculus (Mouse).